The following is a 252-amino-acid chain: 5'-nucleotidase SurE (252 aa).

The a divalent metal cation site is built by aspartate 8, aspartate 9, serine 39, and asparagine 95.

Belongs to the SurE nucleotidase family. A divalent metal cation serves as cofactor.

It is found in the cytoplasm. The catalysed reaction is a ribonucleoside 5'-phosphate + H2O = a ribonucleoside + phosphate. Functionally, nucleotidase that shows phosphatase activity on nucleoside 5'-monophosphates. The sequence is that of 5'-nucleotidase SurE from Clostridium botulinum (strain Kyoto / Type A2).